We begin with the raw amino-acid sequence, 305 residues long: Glutaminase (305 aa).

Residues Ser63, Asn113, Glu158, Asn165, Tyr189, Tyr241, and Val259 each contribute to the substrate site.

Belongs to the glutaminase family. Homotetramer.

It catalyses the reaction L-glutamine + H2O = L-glutamate + NH4(+). The polypeptide is Glutaminase (Aliarcobacter butzleri (strain RM4018) (Arcobacter butzleri)).